The primary structure comprises 853 residues: MSTSETFDAHTPMMQQYLKLKAQHPDILLFYRMGDFYELFYDDAKRASQLLDISLTKRGASAGEPIPMAGVPHHAVENYLAKLVNLGESVAICEQIGDPATSKGPVERKVVRIVTPGTISDEALLQERQDNLLAAIWQDSKGFGYATLDISSGRFRVSEPQDRETMAAELQRTNPAELLYAEDFAEMSLIEGRRGLRRRPLWEFELDTARQQLNLQFGTRDLVGFGVENAPRGLCAAGCLLQYVKDTQRTSLPHIRSITMERQQDGIIMDAATRRNLEITQNLAGGVENTLASVLDCTVTPMGSRMLKRWLHMPVRDTSVLRHRQQAIAALMEYSTEIQPVLRQVGDLERILARLALRTARPRDLARMRHAFQQLPTLNTLLADIEAEYVQTLREQMGDFAELRDLLERAIIEAPPVLVRDGGVIAPGYHEELDEWRALADGATDYLDRLEIREREKLGIDTLKVGFNAVHGYFIQVSRGQSHMVPIHYVRRQTLKNAERYIIPELKEYEDKVLTSKGKALALEKQLYDELFDLLLPHLAELQKSAAALAELDVLTNLAERADTLNYHCPTLTDKPGIRLVEGRHPVVERVLNEPFIANPLSLSPQRRMLIITGPNMGGKSTYMRQTALIVLMAYIGSFVPAEQAEIGPIDRIFTRVGAADDLASGRSTFMVEMTETANILHNATEHSLVLMDEIGRGTSTYDGLSLAWACAESLANRIKALTLFATHYFELTQLPEKMEGVANVHLDAIEHGDTIAFMHSVQDGAASKSYGLAVAALAGVPKEVIKRARQKLRELESLSGNAAATQVDGTQMSLLAAAEETSPAVEALENLDPDSLSPRQALEWIYRLKSLV.

G614–S621 contacts ATP.

This sequence belongs to the DNA mismatch repair MutS family.

Functionally, this protein is involved in the repair of mismatches in DNA. It is possible that it carries out the mismatch recognition step. This protein has a weak ATPase activity. This is DNA mismatch repair protein MutS from Cronobacter sakazakii (strain ATCC BAA-894) (Enterobacter sakazakii).